The following is a 1464-amino-acid chain: DNA polymerase III PolC-type (1464 aa).

Residues 426–582 (YVVFDVETTG…YDAEATGRLL (157 aa)) form the Exonuclease domain.

Belongs to the DNA polymerase type-C family. PolC subfamily.

Its subcellular location is the cytoplasm. The catalysed reaction is DNA(n) + a 2'-deoxyribonucleoside 5'-triphosphate = DNA(n+1) + diphosphate. In terms of biological role, required for replicative DNA synthesis. This DNA polymerase also exhibits 3' to 5' exonuclease activity. This Streptococcus thermophilus (strain ATCC BAA-491 / LMD-9) protein is DNA polymerase III PolC-type.